A 207-amino-acid polypeptide reads, in one-letter code: MLNKLSLLLKDAGISLTDHQKNQLIAYVNMLHKWNKAYNLTSVRDPNEMLVRHILDSIVVAPYLQGERFIDVGTGPGLPGIPLSIVRPEAHFTLLDSLGKRVRFLRQVQHELKLENIEPVQSRVEEFPSEPPFDGVISRAFASLNDMVSWCHHLPGEQGRFYALKGQMPEDEIALLPEEYQVESVVKLHVPALDGERHLVMIKANKI.

Residues Gly-73, Leu-78, 124 to 125, and Arg-139 contribute to the S-adenosyl-L-methionine site; that span reads VE.

This sequence belongs to the methyltransferase superfamily. RNA methyltransferase RsmG family.

The protein resides in the cytoplasm. The enzyme catalyses guanosine(527) in 16S rRNA + S-adenosyl-L-methionine = N(7)-methylguanosine(527) in 16S rRNA + S-adenosyl-L-homocysteine. Its function is as follows. Specifically methylates the N7 position of guanine in position 527 of 16S rRNA. This Escherichia coli (strain SMS-3-5 / SECEC) protein is Ribosomal RNA small subunit methyltransferase G.